The chain runs to 158 residues: NAD(P)H-quinone oxidoreductase subunit J, chloroplastic (158 aa).

Belongs to the complex I 30 kDa subunit family. As to quaternary structure, NDH is composed of at least 16 different subunits, 5 of which are encoded in the nucleus.

The protein resides in the plastid. It is found in the chloroplast thylakoid membrane. The catalysed reaction is a plastoquinone + NADH + (n+1) H(+)(in) = a plastoquinol + NAD(+) + n H(+)(out). It carries out the reaction a plastoquinone + NADPH + (n+1) H(+)(in) = a plastoquinol + NADP(+) + n H(+)(out). Functionally, NDH shuttles electrons from NAD(P)H:plastoquinone, via FMN and iron-sulfur (Fe-S) centers, to quinones in the photosynthetic chain and possibly in a chloroplast respiratory chain. The immediate electron acceptor for the enzyme in this species is believed to be plastoquinone. Couples the redox reaction to proton translocation, and thus conserves the redox energy in a proton gradient. This chain is NAD(P)H-quinone oxidoreductase subunit J, chloroplastic, found in Pelargonium hortorum (Common geranium).